Consider the following 32-residue polypeptide: Jingzhaotoxin F4-32.60 (32 aa).

Cystine bridges form between C2–C17, C9–C22, and C16–C29. D31 is subject to Aspartic acid 1-amide.

This sequence belongs to the neurotoxin 10 (Hwtx-1) family. 30 (Jztx-14) subfamily. Amidated as well as non-amidated forms are found in the venom. Expressed by the venom gland.

The protein resides in the secreted. Its function is as follows. Probable ion channel inhibitor. In Chilobrachys guangxiensis (Chinese earth tiger tarantula), this protein is Jingzhaotoxin F4-32.60.